A 335-amino-acid chain; its full sequence is Methionine import ATP-binding protein MetN (335 aa).

The 240-residue stretch at 2 to 241 (IQFQRLHKSY…PKHATTRRFV (240 aa)) folds into the ABC transporter domain. 38 to 45 (GHSGAGKS) is a binding site for ATP.

It belongs to the ABC transporter superfamily. Methionine importer (TC 3.A.1.24) family. In terms of assembly, the complex is composed of two ATP-binding proteins (MetN), two transmembrane proteins (MetI) and a solute-binding protein (MetQ).

Its subcellular location is the cell inner membrane. It carries out the reaction L-methionine(out) + ATP + H2O = L-methionine(in) + ADP + phosphate + H(+). It catalyses the reaction D-methionine(out) + ATP + H2O = D-methionine(in) + ADP + phosphate + H(+). In terms of biological role, part of the ABC transporter complex MetNIQ involved in methionine import. Responsible for energy coupling to the transport system. In Xanthomonas axonopodis pv. citri (strain 306), this protein is Methionine import ATP-binding protein MetN.